Consider the following 159-residue polypeptide: Protein Smg homolog (159 aa).

The protein belongs to the Smg family.

The chain is Protein Smg homolog from Shewanella amazonensis (strain ATCC BAA-1098 / SB2B).